Here is a 418-residue protein sequence, read N- to C-terminus: Tyrosine--tRNA ligase (418 aa).

Tyr35 is a binding site for L-tyrosine. A 'HIGH' region motif is present at residues 40–49 (PTAKSLHIGH). L-tyrosine-binding residues include Tyr168 and Gln172. A 'KMSKS' region motif is present at residues 228–232 (KYGKT). Lys231 contacts ATP. Residues 352–410 (PTVVGAMVAAGVVDTKSGGRRAVAEGGAYLNNVKVADPDQRLTDDDFLCGRVALVRRGK) enclose the S4 RNA-binding domain.

This sequence belongs to the class-I aminoacyl-tRNA synthetase family. TyrS type 1 subfamily. As to quaternary structure, homodimer.

Its subcellular location is the cytoplasm. It carries out the reaction tRNA(Tyr) + L-tyrosine + ATP = L-tyrosyl-tRNA(Tyr) + AMP + diphosphate + H(+). Functionally, catalyzes the attachment of tyrosine to tRNA(Tyr) in a two-step reaction: tyrosine is first activated by ATP to form Tyr-AMP and then transferred to the acceptor end of tRNA(Tyr). The protein is Tyrosine--tRNA ligase of Cutibacterium acnes (strain DSM 16379 / KPA171202) (Propionibacterium acnes).